A 511-amino-acid polypeptide reads, in one-letter code: Ribose import ATP-binding protein RbsA (511 aa).

ABC transporter domains lie at 7–242 (LQIS…VGRE) and 256–500 (CSTT…SGTQ). 39 to 46 (GENGAGKS) is a binding site for ATP.

It belongs to the ABC transporter superfamily. Ribose importer (TC 3.A.1.2.1) family. The complex is composed of an ATP-binding protein (RbsA), two transmembrane proteins (RbsC) and a solute-binding protein (RbsB).

Its subcellular location is the cell inner membrane. The catalysed reaction is D-ribose(out) + ATP + H2O = D-ribose(in) + ADP + phosphate + H(+). Functionally, part of the ABC transporter complex RbsABC involved in ribose import. Responsible for energy coupling to the transport system. This Ruegeria sp. (strain TM1040) (Silicibacter sp.) protein is Ribose import ATP-binding protein RbsA.